Here is a 331-residue protein sequence, read N- to C-terminus: Ferredoxin--NADP reductase (331 aa).

Glu38, Gln46, Tyr51, Ala91, Leu125, Asp282, and Ser323 together coordinate FAD.

Belongs to the ferredoxin--NADP reductase type 2 family. Homodimer. It depends on FAD as a cofactor.

The catalysed reaction is 2 reduced [2Fe-2S]-[ferredoxin] + NADP(+) + H(+) = 2 oxidized [2Fe-2S]-[ferredoxin] + NADPH. In Deinococcus geothermalis (strain DSM 11300 / CIP 105573 / AG-3a), this protein is Ferredoxin--NADP reductase.